We begin with the raw amino-acid sequence, 129 residues long: D-ribose pyranase (129 aa).

The Proton donor role is filled by H20. Residues D28, H96, and 118-120 each bind substrate; that span reads YAN.

Belongs to the RbsD / FucU family. RbsD subfamily. Homodecamer.

The protein resides in the cytoplasm. The catalysed reaction is beta-D-ribopyranose = beta-D-ribofuranose. The protein operates within carbohydrate metabolism; D-ribose degradation; D-ribose 5-phosphate from beta-D-ribopyranose: step 1/2. Functionally, catalyzes the interconversion of beta-pyran and beta-furan forms of D-ribose. This Streptomyces avermitilis (strain ATCC 31267 / DSM 46492 / JCM 5070 / NBRC 14893 / NCIMB 12804 / NRRL 8165 / MA-4680) protein is D-ribose pyranase.